A 557-amino-acid chain; its full sequence is Urocanate hydratase (557 aa).

The interval 1–20 (MSNPRHNEREVRSPRGDELN) is disordered. NAD(+)-binding positions include 52–53 (GG), glutamine 130, 176–178 (GMG), glutamate 196, arginine 201, 242–243 (NA), 263–267 (QTSAH), 273–274 (YL), and tyrosine 322. Cysteine 410 is a catalytic residue. Glycine 492 is an NAD(+) binding site.

Belongs to the urocanase family. The cofactor is NAD(+).

The protein resides in the cytoplasm. The enzyme catalyses 4-imidazolone-5-propanoate = trans-urocanate + H2O. Its pathway is amino-acid degradation; L-histidine degradation into L-glutamate; N-formimidoyl-L-glutamate from L-histidine: step 2/3. Its function is as follows. Catalyzes the conversion of urocanate to 4-imidazolone-5-propionate. This Brucella suis (strain ATCC 23445 / NCTC 10510) protein is Urocanate hydratase.